Reading from the N-terminus, the 480-residue chain is Probable histone deacetylase 1-B (480 aa).

Positions 10–321 (KVCYYYDGDV…WTYETAVALD (312 aa)) are histone deacetylase. Residue His141 is part of the active site. The interval 387–480 (DSVHDDSGEE…KRVKEETKSV (94 aa)) is disordered. Positions 401-416 (PDKRISIRSSDKRIAC) are enriched in basic and acidic residues. Residues 417–427 (DEEFSDSEDEG) show a composition bias toward acidic residues. Over residues 443–480 (VKTEEEKEGEDKKDVKEEEKAKDEKTDSKRVKEETKSV) the composition is skewed to basic and acidic residues.

The protein belongs to the histone deacetylase family. HD type 1 subfamily. As to quaternary structure, found in a large complex with RBBP4 and MI-2.

It is found in the nucleus. It localises to the cytoplasm. The catalysed reaction is N(6)-acetyl-L-lysyl-[histone] + H2O = L-lysyl-[histone] + acetate. It catalyses the reaction N(6)-acetyl-L-lysyl-[protein] + H2O = L-lysyl-[protein] + acetate. It carries out the reaction N(6)-(2E)-butenoyl-L-lysyl-[protein] + H2O = (2E)-2-butenoate + L-lysyl-[protein]. Histone deacetylase that catalyzes the deacetylation of lysine residues on the N-terminal part of the core histones (H2A, H2B, H3 and H4). Histone deacetylation gives a tag for epigenetic repression and plays an important role in transcriptional regulation, cell cycle progression and developmental events. Histone deacetylases act via the formation of large multiprotein complexes. Also functions as a deacetylase for non-histone proteins. In addition to protein deacetylase activity, also has protein-lysine deacylase activity: acts as a protein decrotonylase by mediating decrotonylation ((2E)-butenoyl) of histones. The polypeptide is Probable histone deacetylase 1-B (hdac1-b) (Xenopus laevis (African clawed frog)).